A 213-amino-acid polypeptide reads, in one-letter code: Octanoyltransferase (213 aa).

A BPL/LPL catalytic domain is found at 32 to 207 (ESTLDEIWLV…NILALLNNPD (176 aa)). Substrate contacts are provided by residues 71-78 (RGGQVTYH), 138-140 (SLG), and 151-153 (GLA). The Acyl-thioester intermediate role is filled by C169.

This sequence belongs to the LipB family.

Its subcellular location is the cytoplasm. It carries out the reaction octanoyl-[ACP] + L-lysyl-[protein] = N(6)-octanoyl-L-lysyl-[protein] + holo-[ACP] + H(+). The protein operates within protein modification; protein lipoylation via endogenous pathway; protein N(6)-(lipoyl)lysine from octanoyl-[acyl-carrier-protein]: step 1/2. Catalyzes the transfer of endogenously produced octanoic acid from octanoyl-acyl-carrier-protein onto the lipoyl domains of lipoate-dependent enzymes. Lipoyl-ACP can also act as a substrate although octanoyl-ACP is likely to be the physiological substrate. This is Octanoyltransferase from Escherichia coli (strain SMS-3-5 / SECEC).